The sequence spans 88 residues: RQC P-site tRNA stabilizing factor (88 aa).

Residues 1-60 (MRLDKYLKVSRIIKRRTVAKEVADKGRIKVNGILAKSSTDLKVNDQVEIRFGNKLLLVKV) enclose the S4 RNA-binding domain.

It belongs to the RqcP family. Associates with stalled 50S ribosomal subunits. Binds to RqcH, 23S rRNA and the P-site tRNA. Does not require RqcH for association with 50S subunits.

Its function is as follows. Key component of the ribosome quality control system (RQC), a ribosome-associated complex that mediates the extraction of incompletely synthesized nascent chains from stalled ribosomes and their subsequent degradation. RqcH recruits Ala-charged tRNA, and with RqcP directs the elongation of stalled nascent chains on 50S ribosomal subunits, leading to non-templated C-terminal alanine extensions (Ala tail). The Ala tail promotes nascent chain degradation. RqcP is associated with the translocation-like movement of the peptidyl-tRNA from the A-site into the P-site. This Streptococcus pneumoniae (strain ATCC BAA-255 / R6) protein is RQC P-site tRNA stabilizing factor.